We begin with the raw amino-acid sequence, 295 residues long: NAD kinase (295 aa).

Aspartate 74 acts as the Proton acceptor in catalysis. NAD(+)-binding positions include 74-75, 148-149, histidine 159, arginine 176, aspartate 178, and 189-194; these read DG, ND, and TAYALS.

This sequence belongs to the NAD kinase family. Requires a divalent metal cation as cofactor.

The protein resides in the cytoplasm. The enzyme catalyses NAD(+) + ATP = ADP + NADP(+) + H(+). Involved in the regulation of the intracellular balance of NAD and NADP, and is a key enzyme in the biosynthesis of NADP. Catalyzes specifically the phosphorylation on 2'-hydroxyl of the adenosine moiety of NAD to yield NADP. The sequence is that of NAD kinase from Legionella pneumophila (strain Corby).